The chain runs to 644 residues: MQTVRMTTAQALVKFLNQQYIEFDGEQQKFIKGIFTIFGHGNVVGLGQALEEDAGELEVYQGRNEQGMANAAMAFAKQKHRKQIMACTSSVGPGSANMITSAATASANNIPVLLLPGDVFATRQPDPVLQQIEQTHDLSISTNDAFRAVSKYWDRINRPEQLMTAMIQAMRVLTNPADTGAVTICLPQDVQGEAWDFPSYFFQKCVHRIERRLPTRASLADAVEMIKRKKKPVMICGGGVRYAEAAEELKQFAEAFRIPFGETQAGKSAIESSHPYNLGGIGVTGNLAANTIAKEADLVIGIGTRFTDFTTASKQLFQNEEVEFVNINISEFHANKLDALKVIADAKEALLALINELQAIEYRSSYTVEIAAAKEFWETELARLHNIRFTGQDFKPEVEGHFDDNLNEYVDALGTQLTQTAVIGEMNTLLDEDAIIVGAAGSLPGDLQRMWTSRKPNTYHMEYGYSCMGYEVAGALGAKLAEPSKEVYAMVGDGSYQMLHSELVTSLQENKKINVLLFDNSGFGCINNLQMGNGMGSFGTEFRYRNEETRKLNGAIMKIDFAASAAGYGVKTYRVTSVEQLQEALKDAKKQTVSTLIDIKVLPKTMTNGYESWWHVGVAEVSNSQSVQAAYESKVSNLQKARSY.

A thiamine diphosphate-binding site is contributed by Glu-65. The segment at 442-522 is thiamine pyrophosphate binding; it reads SLPGDLQRMW…INVLLFDNSG (81 aa). Residues Asp-493 and Asn-520 each coordinate Mg(2+).

This sequence belongs to the TPP enzyme family. It depends on Mg(2+) as a cofactor. Requires thiamine diphosphate as cofactor.

It carries out the reaction 3D-3,5/4-trihydroxycyclohexane-1,2-dione + H2O = 5-deoxy-D-glucuronate + H(+). The protein operates within polyol metabolism; myo-inositol degradation into acetyl-CoA; acetyl-CoA from myo-inositol: step 3/7. Its function is as follows. Involved in the cleavage of the C1-C2 bond of 3D-(3,5/4)-trihydroxycyclohexane-1,2-dione (THcHDO) to yield 5-deoxy-glucuronate (5DG). The polypeptide is 3D-(3,5/4)-trihydroxycyclohexane-1,2-dione hydrolase 2 (Bacillus cereus (strain ZK / E33L)).